Reading from the N-terminus, the 210-residue chain is Uracil phosphoribosyltransferase (210 aa).

5-phospho-alpha-D-ribose 1-diphosphate-binding positions include arginine 78, arginine 103, and aspartate 130–serine 138. Uracil contacts are provided by residues isoleucine 193 and glycine 198–alanine 200. Aspartate 199 is a 5-phospho-alpha-D-ribose 1-diphosphate binding site.

Belongs to the UPRTase family. The cofactor is Mg(2+).

It carries out the reaction UMP + diphosphate = 5-phospho-alpha-D-ribose 1-diphosphate + uracil. The protein operates within pyrimidine metabolism; UMP biosynthesis via salvage pathway; UMP from uracil: step 1/1. Its activity is regulated as follows. Allosterically activated by GTP. Its function is as follows. Catalyzes the conversion of uracil and 5-phospho-alpha-D-ribose 1-diphosphate (PRPP) to UMP and diphosphate. In Salinibacter ruber (strain DSM 13855 / M31), this protein is Uracil phosphoribosyltransferase.